The primary structure comprises 411 residues: Serine hydroxymethyltransferase (411 aa).

120-122 (GHL) is a (6S)-5,6,7,8-tetrahydrofolate binding site. Lys225 is subject to N6-(pyridoxal phosphate)lysine. 350–352 (SPF) lines the (6S)-5,6,7,8-tetrahydrofolate pocket.

The protein belongs to the SHMT family. As to quaternary structure, homodimer. It depends on pyridoxal 5'-phosphate as a cofactor.

The protein resides in the cytoplasm. The enzyme catalyses (6R)-5,10-methylene-5,6,7,8-tetrahydrofolate + glycine + H2O = (6S)-5,6,7,8-tetrahydrofolate + L-serine. It functions in the pathway one-carbon metabolism; tetrahydrofolate interconversion. Its pathway is amino-acid biosynthesis; glycine biosynthesis; glycine from L-serine: step 1/1. In terms of biological role, catalyzes the reversible interconversion of serine and glycine with tetrahydrofolate (THF) serving as the one-carbon carrier. This reaction serves as the major source of one-carbon groups required for the biosynthesis of purines, thymidylate, methionine, and other important biomolecules. Also exhibits THF-independent aldolase activity toward beta-hydroxyamino acids, producing glycine and aldehydes, via a retro-aldol mechanism. The sequence is that of Serine hydroxymethyltransferase from Lactobacillus gasseri (strain ATCC 33323 / DSM 20243 / BCRC 14619 / CIP 102991 / JCM 1131 / KCTC 3163 / NCIMB 11718 / NCTC 13722 / AM63).